The sequence spans 339 residues: UDP-glucose 4-epimerase (339 aa).

NAD(+)-binding positions include 12-13 (FI), 32-37 (DNLCNS), 59-60 (DI), 81-85 (FAGLK), N100, S125, Y150, K154, and F179. Residues S125 and Y150 each coordinate substrate. Y150 (proton acceptor) is an active-site residue. Substrate contacts are provided by residues N180, 200-201 (NL), 217-219 (AVF), R232, and 293-296 (RAGD).

This sequence belongs to the NAD(P)-dependent epimerase/dehydratase family. As to quaternary structure, homodimer. NAD(+) is required as a cofactor.

It catalyses the reaction UDP-alpha-D-glucose = UDP-alpha-D-galactose. It functions in the pathway carbohydrate metabolism; galactose metabolism. Functionally, involved in the metabolism of galactose. Plays an essential role in the incorporation of galactose into meningococcal lipopolysaccharide surface molecules, which are important for pathogenesis. Catalyzes the conversion of UDP-galactose (UDP-Gal) to UDP-glucose (UDP-Glc) through a mechanism involving the transient reduction of NAD. The polypeptide is UDP-glucose 4-epimerase (galE) (Neisseria meningitidis serogroup B (strain ATCC BAA-335 / MC58)).